The chain runs to 189 residues: Elongation factor P (189 aa).

Belongs to the elongation factor P family.

The protein localises to the cytoplasm. Its pathway is protein biosynthesis; polypeptide chain elongation. Functionally, involved in peptide bond synthesis. Stimulates efficient translation and peptide-bond synthesis on native or reconstituted 70S ribosomes in vitro. Probably functions indirectly by altering the affinity of the ribosome for aminoacyl-tRNA, thus increasing their reactivity as acceptors for peptidyl transferase. This chain is Elongation factor P, found in Rhizobium leguminosarum bv. trifolii (strain WSM2304).